The sequence spans 418 residues: Equilibrative nucleotide transporter 4 (418 aa).

The next 11 membrane-spanning stretches (helical) occupy residues 20–40 (MVVC…MLTI), 54–74 (SRVF…ILAY), 85–105 (ILTG…LDLT), 108–128 (GHGG…FGLA), 147–169 (LIQS…RLIT), 186–206 (IFLA…AYVF), 264–284 (HAVN…GFLY), 291–311 (GLGD…DLFG), 326–346 (KALT…YFTA), 353–373 (WMIM…VCIM), and 392–412 (LVVF…LWLI).

This sequence belongs to the SLC29A/ENT transporter (TC 2.A.57) family. In terms of tissue distribution, expressed in leaves and at lowe levels in stems and flowers.

It is found in the cell membrane. Nucleoside transporter that can mediate uptake of adenosine, uridine, guanosine or cytidine when expressed in a heterologous system (yeast). The sequence is that of Equilibrative nucleotide transporter 4 (ENT4) from Arabidopsis thaliana (Mouse-ear cress).